Consider the following 452-residue polypeptide: MNIVILAAGMGKRMQSALPKVLHPLAGKPLLSHVIDTARQLSPSRLCVIYGHGGEQVPQLLQAKDLSFAKQEPQLGTGHAVMQAVPQLDDHTPTLILYGDVPLTTAASLQRLLDSAGNDKLGILTVNLGNPTGYGRIVRENGAITRIVEQKDAKPAELEINEINTGIMVAPTAALKRWLAKLSNNNAQGEYYLTDIVASAVADGVAVVSAQPDHEWETHGVNSKVQLAELERIHQRNIAHALLEQGVTLADPARIDVRGTLTCGRDVTIDVGCVFEGDVSLADGVRIDANCVIHNSTIGARSHVRPYSHFENAVVGAECIIGPYARLRPGTVLAEDVHIGNFVEVKNSDIAAHSKANHLTYVGDSTVGSRVNIGAGTITCNYDGVNKSRTIIEDDVFVGSATQLIAPIRVGKGATLGAGTTLTKDAPADKLTVSRAKQITVDNWQRPVKIKK.

The segment at 1 to 224 (MNIVILAAGM…EWETHGVNSK (224 aa)) is pyrophosphorylase. Residues 6–9 (LAAG), Lys-20, Gln-71, 76–77 (GT), 98–100 (YGD), Gly-135, Glu-149, Asn-164, and Asn-222 contribute to the UDP-N-acetyl-alpha-D-glucosamine site. Residue Asp-100 participates in Mg(2+) binding. Asn-222 contributes to the Mg(2+) binding site. Residues 225-245 (VQLAELERIHQRNIAHALLEQ) form a linker region. Residues 246-452 (GVTLADPARI…NWQRPVKIKK (207 aa)) are N-acetyltransferase. UDP-N-acetyl-alpha-D-glucosamine is bound by residues Arg-328 and Lys-346. Catalysis depends on His-358, which acts as the Proton acceptor. UDP-N-acetyl-alpha-D-glucosamine-binding residues include Tyr-361 and Asn-372. Acetyl-CoA contacts are provided by residues Ala-375, 381 to 382 (NY), Ser-400, Ala-418, and Arg-435.

This sequence in the N-terminal section; belongs to the N-acetylglucosamine-1-phosphate uridyltransferase family. It in the C-terminal section; belongs to the transferase hexapeptide repeat family. In terms of assembly, homotrimer. The cofactor is Mg(2+).

The protein localises to the cytoplasm. The enzyme catalyses alpha-D-glucosamine 1-phosphate + acetyl-CoA = N-acetyl-alpha-D-glucosamine 1-phosphate + CoA + H(+). The catalysed reaction is N-acetyl-alpha-D-glucosamine 1-phosphate + UTP + H(+) = UDP-N-acetyl-alpha-D-glucosamine + diphosphate. It functions in the pathway nucleotide-sugar biosynthesis; UDP-N-acetyl-alpha-D-glucosamine biosynthesis; N-acetyl-alpha-D-glucosamine 1-phosphate from alpha-D-glucosamine 6-phosphate (route II): step 2/2. It participates in nucleotide-sugar biosynthesis; UDP-N-acetyl-alpha-D-glucosamine biosynthesis; UDP-N-acetyl-alpha-D-glucosamine from N-acetyl-alpha-D-glucosamine 1-phosphate: step 1/1. The protein operates within bacterial outer membrane biogenesis; LPS lipid A biosynthesis. Its function is as follows. Catalyzes the last two sequential reactions in the de novo biosynthetic pathway for UDP-N-acetylglucosamine (UDP-GlcNAc). The C-terminal domain catalyzes the transfer of acetyl group from acetyl coenzyme A to glucosamine-1-phosphate (GlcN-1-P) to produce N-acetylglucosamine-1-phosphate (GlcNAc-1-P), which is converted into UDP-GlcNAc by the transfer of uridine 5-monophosphate (from uridine 5-triphosphate), a reaction catalyzed by the N-terminal domain. The sequence is that of Bifunctional protein GlmU from Janthinobacterium sp. (strain Marseille) (Minibacterium massiliensis).